The chain runs to 93 residues: Small ribosomal subunit protein uS19 (93 aa).

This sequence belongs to the universal ribosomal protein uS19 family.

Functionally, protein S19 forms a complex with S13 that binds strongly to the 16S ribosomal RNA. This chain is Small ribosomal subunit protein uS19, found in Clavibacter michiganensis subsp. michiganensis (strain NCPPB 382).